The primary structure comprises 414 residues: Solute carrier family 25 member 46-B (414 aa).

The span at 1 to 13 shows a compositional bias: basic and acidic residues; the sequence is MQPRRPDRFDGLE. The segment at 1–89 is disordered; sequence MQPRRPDRFD…AFGEENSGSS (89 aa). Positions 29–50 are enriched in polar residues; the sequence is YQSSFPARSLSSSGDLSQQWVT. A Solcar 1 repeat occupies 92–183; that stretch reads QVNRFAGFGI…GMLSEFTHLP (92 aa). 6 consecutive transmembrane segments (helical) span residues 99–119, 159–179, 198–218, 254–274, 310–330, and 379–399; these read FGIG…CIVL, MGST…LSEF, HLLL…ASLI, LLPL…HYII, FPEL…LYPL, and LGFY…AIVL. The Solcar 2 repeat unit spans residues 307–412; the sequence is EDYFPELLAN…KIIYSSVVQT (106 aa).

It belongs to the mitochondrial carrier (TC 2.A.29) family.

It is found in the mitochondrion outer membrane. Functionally, may play a role in mitochondrial dynamics by controlling mitochondrial membrane fission. The polypeptide is Solute carrier family 25 member 46-B (slc25a46-b) (Xenopus laevis (African clawed frog)).